A 151-amino-acid chain; its full sequence is Phosphoribosyl-AMP cyclohydrolase (151 aa).

Position 94 (aspartate 94) interacts with Mg(2+). Residue cysteine 95 participates in Zn(2+) binding. Mg(2+)-binding residues include aspartate 96 and aspartate 98. Positions 112 and 119 each coordinate Zn(2+).

It belongs to the PRA-CH family. In terms of assembly, homodimer. The cofactor is Mg(2+). Zn(2+) serves as cofactor.

The protein localises to the cytoplasm. It carries out the reaction 1-(5-phospho-beta-D-ribosyl)-5'-AMP + H2O = 1-(5-phospho-beta-D-ribosyl)-5-[(5-phospho-beta-D-ribosylamino)methylideneamino]imidazole-4-carboxamide. The protein operates within amino-acid biosynthesis; L-histidine biosynthesis; L-histidine from 5-phospho-alpha-D-ribose 1-diphosphate: step 3/9. Its function is as follows. Catalyzes the hydrolysis of the adenine ring of phosphoribosyl-AMP. This chain is Phosphoribosyl-AMP cyclohydrolase, found in Rhodopseudomonas palustris (strain TIE-1).